Reading from the N-terminus, the 642-residue chain is MKETAQEYKVSAVIPTLLKNWILRVVYATLDHIPPFVWEILHVITDIYFFWVQKLINYVRPHSRVIYYNAIKKLDECDTYQMWCQQASVVDEITGANLWRRNFFSRRYDFNSVIEQYSILENMLREEKYDVVKEKFSTTGPCMLRNFAGIGDKKLFTKSLMGTKLLIEQYLTRILEGLDILNNQTLTPTSFFQRCKLSLGTTALILQGGSLFGLFHLGVIRGLLLQDLMPNIISGSSMGACVASLFGCLSNEQLKQLLTDDNLLNIIKNDVDLLKSCGYGNLEQHLNLGTLIQNLIHHGYSQDVYLFIRFVMKYIVKEKTFEEVYQITGKVFNIVIHPTDKSCPNLLNYVTTPNVLIKSAIECSLGSGVISEDTSLLCKNLENEIEPFLNINKNKQVKFLTPENANNPSITESPYTRLTELFNVNNFIVSLARPYLAPLVVNDLKHEIKTSKYYYYKHYPNMPPINANTVRKTQRSSSQSPIKAGTVEDLEPEPLMSPVPPSSAVNDSAEYIIPELGIPQLNFTEMEPLAFKFKYHLERKLKNIATMEFRHRMEVLDNLGLLCSLIKRLIIDEKTPRSATEIAVVPRMKSLSLTRIIEGQLNNIPYWIKSGERSTWPALALIKTRCAVEFKLDDIIRARRSR.

The 189-residue stretch at 204-392 folds into the PNPLA domain; the sequence is LILQGGSLFG…NEIEPFLNIN (189 aa). The short motif at 235–239 is the GXSXG element; the sequence is GSSMG. Ser-237 functions as the Nucleophile in the catalytic mechanism. Residues 298–303 carry the HXXXXD acyltransferase motif motif; it reads HGYSQD. Glu-403 acts as the Proton acceptor in catalysis. Residues 471 to 481 are compositionally biased toward polar residues; that stretch reads RKTQRSSSQSP. Residues 471-502 are disordered; that stretch reads RKTQRSSSQSPIKAGTVEDLEPEPLMSPVPPS.

It localises to the lipid droplet. The catalysed reaction is a triacylglycerol + H2O = a diacylglycerol + a fatty acid + H(+). It carries out the reaction 1,2,3-tri-(9Z-octadecenoyl)-glycerol + H2O = di-(9Z)-octadecenoylglycerol + (9Z)-octadecenoate + H(+). The enzyme catalyses di-(9Z)-octadecenoylglycerol + H2O = (9Z-octadecenoyl)-glycerol + (9Z)-octadecenoate + H(+). It catalyses the reaction a 1-acyl-sn-glycero-3-phosphoethanolamine + (9Z)-octadecenoyl-CoA = 1-acyl-2-(9Z)-octadecenoyl-sn-glycero-3-phosphoethanolamine + CoA. The catalysed reaction is a 1-acyl-sn-glycero-3-phosphoethanolamine + hexadecanoyl-CoA = 1-acyl-2-hexadecanoyl-sn-glycero-3-phosphoethanolamine + CoA. Loses its lipolytic activity in cells lacking nonpolar lipids. In terms of biological role, lipid particle-localized triacylglycerol (TAG) lipase. The lipid droplet/particle is a lipid storage compartment which serves as a depot of energy and building blocks for membrane lipid biosynthesis. Involved in the mobilization of the non-polar storage lipids triacylglycerols (TAGs) from lipid particles by hydrolysis of TAGs, releasing and supplying specific fatty acids to the appropriate metabolic pathways. Also catalyzes the acylation of lysophosphatidic acid (LPA). Important for efficient sporulation, but rather through its acyltransferase than lipase activity. The polypeptide is Triacylglycerol lipase 3 (TGL3) (Saccharomyces cerevisiae (strain ATCC 204508 / S288c) (Baker's yeast)).